A 756-amino-acid chain; its full sequence is Catalase-peroxidase (756 aa).

The N-terminal stretch at 1-26 is a signal peptide; sequence MKGKTVNKQTLAALVSALLVFNPAVA. Residues 126–248 constitute a cross-link (tryptophyl-tyrosyl-methioninium (Trp-Tyr) (with M-274)); that stretch reads WHSAGTYRTL…LGATHMGLIY (123 aa). The active-site Proton acceptor is the histidine 127. The tryptophyl-tyrosyl-methioninium (Tyr-Met) (with W-126) cross-link spans 248–274; it reads YVNPEGPKGVPDPLGSAKNIRTAFSRM. Histidine 289 provides a ligand contact to heme b.

This sequence belongs to the peroxidase family. Peroxidase/catalase subfamily. In terms of assembly, homodimer or homotetramer. It depends on heme b as a cofactor. In terms of processing, formation of the three residue Trp-Tyr-Met cross-link is important for the catalase, but not the peroxidase activity of the enzyme.

The catalysed reaction is H2O2 + AH2 = A + 2 H2O. It carries out the reaction 2 H2O2 = O2 + 2 H2O. In terms of biological role, bifunctional enzyme with both catalase and broad-spectrum peroxidase activity. This chain is Catalase-peroxidase, found in Shewanella loihica (strain ATCC BAA-1088 / PV-4).